The chain runs to 729 residues: Polyribonucleotide nucleotidyltransferase (729 aa).

The Mg(2+) site is built by Asp-510 and Asp-516. The KH domain maps to 576–635 (PRVISVKIPVDKIGEVIGPKGKMINQIQADSGAEITVEDDGTIYIGAADGTSAETARSAI). An S1 motif domain is found at 647–719 (GERYLGTIVK…ARGKISLSPS (73 aa)).

This sequence belongs to the polyribonucleotide nucleotidyltransferase family. Mg(2+) serves as cofactor.

The protein localises to the cytoplasm. It carries out the reaction RNA(n+1) + phosphate = RNA(n) + a ribonucleoside 5'-diphosphate. Its function is as follows. Involved in mRNA degradation. Catalyzes the phosphorolysis of single-stranded polyribonucleotides processively in the 3'- to 5'-direction. The protein is Polyribonucleotide nucleotidyltransferase of Frankia alni (strain DSM 45986 / CECT 9034 / ACN14a).